The sequence spans 145 residues: Halilectin 3, alpha chain (145 aa).

Asparagine 73 is a glycosylation site (N-linked (GlcNAc...) asparagine).

As to quaternary structure, probable heterotrimer consisting of an alpha chain and two beta chains. The alpha chain can probably have different glycosylation states. Post-translationally, glycosylated.

In terms of biological role, lectin with affinity for N-acetyl-galactosamine, carragenan and glycoprotein porcine stomach mucin (PSM). Has metal-independent hemagglutinating activity towards erythrocytes from rabbit and human. Hemagglutinating activity is not inhibited by D-galactose, D-glucose, D-mannose, D-fucose, methyl-alpha-D-galactopyranoside, methyl-alpha-D-glucopyranoside, N-acetyl-glucosamine, N-acetyl-mannosamine, D-fructose, alpha-D-lactose, beta-D-lactose, D-lactulose, D-sucrose, fucoidan or glycoproteins thyroglobulin and ovalmucoid. In Haliclona caerulea (Blue Caribbean sponge), this protein is Halilectin 3, alpha chain.